A 1166-amino-acid polypeptide reads, in one-letter code: UDP-N-acetylglucosamine transferase subunit ALG13 (1166 aa).

The glycosyltransferase activity stretch occupies residues 1–125 (MKRAFVTVGT…LHKEGHLFYC (125 aa)). Positions 126 to 394 (TCRVLSCPAP…GSRRNKHHAL (269 aa)) are deubiquitinase activity. The OTU domain maps to 225-346 (LFRKVVAKDA…NGHYDSVYSK (122 aa)). The For deubiquitinase activity role is filled by Asp-233. The active-site Nucleophile; for deubiquitinase activity is Cys-236. His-339 acts as the For deubiquitinase activity in catalysis. Residues 393 to 438 (ALTASVEGSSDQKSSTEDRTEEAAACSSAASTPEGNKQGTERQKVP) form a disordered region. In terms of domain architecture, Tudor spans 486–546 (YYFLGDKCQV…RPVNQVALLP (61 aa)). Pro residues-rich tracts occupy residues 921-930 (PPPLPPPPPA), 941-957 (PLPPPPPPPPPPPPPYS), and 1004-1034 (QPQPQPQPQPQPQPQPQPQPQQPQQQQPPPQ). Disordered regions lie at residues 921–966 (PPPL…SDLP) and 998–1056 (QQQL…EQPL).

It belongs to the glycosyltransferase 28 family. As to quaternary structure, forms with ALG14 the active heterodimeric UDP-N-acetylglucosamine transferase complex. Not able to interact with ALG14 to form an active UDP-N-acetylglucosamine transferase complex.

The protein resides in the endoplasmic reticulum membrane. The catalysed reaction is an N-acetyl-alpha-D-glucosaminyl-diphospho-di-trans,poly-cis-dolichol + UDP-N-acetyl-alpha-D-glucosamine = an N,N'-diacetylchitobiosyl-diphospho-di-trans,poly-cis-dolichol + UDP + H(+). The protein operates within protein modification; protein glycosylation. Functionally, catalytic subunit of the UDP-N-acetylglucosamine transferase complex that operates in the biosynthetic pathway of dolichol-linked oligosaccharides, the glycan precursors employed in protein asparagine (N)-glycosylation. The assembly of dolichol-linked oligosaccharides begins on the cytosolic side of the endoplasmic reticulum membrane and finishes in its lumen. The sequential addition of sugars to dolichol pyrophosphate produces dolichol-linked oligosaccharides containing fourteen sugars, including two GlcNAcs, nine mannoses and three glucoses. Once assembled, the oligosaccharide is transferred from the lipid to nascent proteins by oligosaccharyltransferases. On the cytoplasmic face of the endoplasmic reticulum, the dimeric ALG13/ALG14 complex catalyzes the second step of dolichol pyrophosphate biosynthesis, transferring a beta1,4-linked N-acetylglucosamine (GlcNAc) from UDP-GlcNAc to GlcNAc-pyrophosphatedolichol (Gn-PDol) to produce N,N'-diacetylchitobiosyl diphosphodolichol. N,N'-diacetylchitobiosyl diphosphodolichol is a substrate for ALG1, the following enzyme in the biosynthetic pathway. Its function is as follows. No glycosyltransferase or deubiquitinase activity is detected for this potential multifunctional enzyme. This is UDP-N-acetylglucosamine transferase subunit ALG13 from Mus musculus (Mouse).